A 406-amino-acid chain; its full sequence is FBD-associated F-box protein At1g60410 (406 aa).

Residues 9-59 enclose the F-box domain; sequence KDRLSDLPCHLLCRILSNLSTKESVRTSVLSPRWSNLWSLVSVLDLDFQDF. The 51-residue stretch at 355-405 folds into the FBD domain; it reads MEEIKLSPVPQCVLSSLDFLQLKAPSTPSKMKLATYFRKKCTRLTKMLLSG.

The chain is FBD-associated F-box protein At1g60410 from Arabidopsis thaliana (Mouse-ear cress).